The primary structure comprises 106 residues: Thioredoxin (106 aa).

One can recognise a Thioredoxin domain in the interval 2–106; sequence SHYIELTEEN…LKEQLNKLLG (105 aa). Cys30 and Cys33 are joined by a disulfide.

It belongs to the thioredoxin family.

In terms of biological role, participates in various redox reactions through the reversible oxidation of its active center dithiol to a disulfide and catalyzes dithiol-disulfide exchange reactions. The chain is Thioredoxin (trxA) from Helicobacter pylori (strain J99 / ATCC 700824) (Campylobacter pylori J99).